The primary structure comprises 1573 residues: Synaptojanin-1 (1573 aa).

One can recognise an SAC domain in the interval 119–442; the sequence is VRKVLNSGNF…GDSISKIYAG (324 aa). The segment at 500 to 899 is catalytic; the sequence is GSLRVSEQTL…GPPDGTVLVS (400 aa). A phosphoserine mark is found at S820 and S830. Residues 902–971 form the RRM domain; that stretch reads SSLPENNFFD…RTITIALKSP (70 aa). Low complexity predominate over residues 1029–1054; it reads HLQPSSSSGLGTSPSSSPRTSPCQSP. Disordered regions lie at residues 1029 to 1322, 1341 to 1360, 1370 to 1463, and 1535 to 1573; these read HLQP…PLKI, SVQT…QLPS, VSCM…GFKD, and SRRP…FTER. S1053 is modified (phosphoserine). Positions 1108–1130 are enriched in pro residues; sequence PPPPRPVAPPTRPAPPQRPPPPS. S1150 and S1178 each carry phosphoserine. R1201 bears the Omega-N-methylarginine mark. T1220 is modified (phosphothreonine). A compositionally biased stretch (polar residues) spans 1221 to 1234; sequence PESQSKTSETSKGS. S1292 carries the phosphoserine modification. Residues 1293-1304 are compositionally biased toward low complexity; that stretch reads SHSLPSEASSQP. Residues 1313 to 1322 are compositionally biased toward basic and acidic residues; sequence DGKRESPLKI. Phosphoserine occurs at positions 1318 and 1345. T1349 carries the post-translational modification Phosphothreonine. Over residues 1382–1407 the composition is skewed to polar residues; the sequence is RSQSQENMRSSPNPFITGLTRTNPFS. A run of 3 repeats spans residues 1396 to 1398, 1406 to 1408, and 1417 to 1419. The tract at residues 1396 to 1419 is 3 X 3 AA repeats of N-P-F; it reads FITGLTRTNPFSDRTAAPGNPFRA. Positions 1536–1555 are enriched in pro residues; sequence RRPPPPPVPLLPPGTSPPVD. 2 positions are modified to phosphoserine: S1551 and S1565.

The protein belongs to the synaptojanin family. This sequence in the central section; belongs to the inositol 1,4,5-trisphosphate 5-phosphatase family. Interacts with ASH/GRB2. Interacts with PACSIN1, PACSIN2 and PACSIN3. Interacts with AMPH, SH3GL1, SH3GL2 and SH3GL3. Interacts with MYO1E (via SH3 domain). Interacts with BIN1 and DNM1. Interacts with EPS15.

Its subcellular location is the cytoplasm. It is found in the perinuclear region. It carries out the reaction a 1,2-diacyl-sn-glycero-3-phospho-(1D-myo-inositol-4,5-bisphosphate) + H2O = a 1,2-diacyl-sn-glycero-3-phospho-(1D-myo-inositol 4-phosphate) + phosphate. In terms of biological role, phosphatase that acts on various phosphoinositides, including phosphatidylinositol 4-phosphate, phosphatidylinositol (4,5)-bisphosphate and phosphatidylinositol (3,4,5)-trisphosphate. Has a role in clathrin-mediated endocytosis. Hydrolyzes PIP2 bound to actin regulatory proteins resulting in the rearrangement of actin filaments downstream of tyrosine kinase and ASH/GRB2. This is Synaptojanin-1 (SYNJ1) from Homo sapiens (Human).